The primary structure comprises 202 residues: FMN-dependent NADH:quinone oxidoreductase 2 (202 aa).

FMN-binding positions include serine 9, 15–17 (SAS), 95–98 (MYNF), and 139–142 (TAGG).

It belongs to the azoreductase type 1 family. Homodimer. Requires FMN as cofactor.

It catalyses the reaction 2 a quinone + NADH + H(+) = 2 a 1,4-benzosemiquinone + NAD(+). The catalysed reaction is N,N-dimethyl-1,4-phenylenediamine + anthranilate + 2 NAD(+) = 2-(4-dimethylaminophenyl)diazenylbenzoate + 2 NADH + 2 H(+). In terms of biological role, quinone reductase that provides resistance to thiol-specific stress caused by electrophilic quinones. Reduces both benzoquinones and naphthoquinones efficiently. Its function is as follows. Also exhibits azoreductase activity. Catalyzes the reductive cleavage of the azo bond in aromatic azo compounds to the corresponding amines. Preferred substrates are the large bis-azo dye Ponceau BS, amaranth and tropaeolin O. This chain is FMN-dependent NADH:quinone oxidoreductase 2, found in Pseudomonas aeruginosa (strain ATCC 15692 / DSM 22644 / CIP 104116 / JCM 14847 / LMG 12228 / 1C / PRS 101 / PAO1).